A 233-amino-acid chain; its full sequence is Protein DEHYDRATION-INDUCED 19 homolog 2 (233 aa).

Residues 176 to 215 form a disordered region; it reads DLHSDSSDNNFLLNKFPDDKTAERAEPSLSEKDQKERAQR. Positions 191–214 are enriched in basic and acidic residues; it reads FPDDKTAERAEPSLSEKDQKERAQ.

Belongs to the Di19 family.

The chain is Protein DEHYDRATION-INDUCED 19 homolog 2 (DI19-2) from Oryza sativa subsp. japonica (Rice).